Reading from the N-terminus, the 572-residue chain is MAFGSKILNIGSKSDEYNDDAVPLDQVEEGAQERRYYLGLTKREFKLMMLAGVGFFLDSYDLFIINLVTPIFEYLYWGGIEKGPTGKGHYPSGIRGLVNASANIGNIFGQLLFGFMGDFFGRKFVYGKEMVIVIIATVLVIAMPKSIHSPLSKMMWVFCWRWLLGVGIGGDYPMSAAITSERSKIKRRGTLISLIFAFQGFGTLAGAIVTIILLGCFEHPLNREGHYHKLEGVWRLQFGLALVPAIGVLIPRLIMKESKSYENSKALNSAEGKDPKAFFNTDDEDNMKKSSSHGDSEVVEASDRYANQADAADAEVDNIEKQFAAVTTPENSSGFITYFRQWRHFKHLLGTSVCWFLLDIAFYGVNLNQSVILKNIGFSTGTNEYRTLMKNAIGNLIIAVAGYVPGYWFNVFLVEILGRKWIQLQGFVITGLMFAILAGRWNEISTGGRFACFVIAQLFSNFGPNSTTFIYPAEVFPARVRGTAHGVSAALGKCGAILASLLFNFLTGVIGYGNVMWIFCGCMWGGILFTLLLPETKGRDADEIDRLELFYGKDGKVQCDSKWKSWYFNGIF.

At 1 to 47 (MAFGSKILNIGSKSDEYNDDAVPLDQVEEGAQERRYYLGLTKREFKL) the chain is on the cytoplasmic side. Ser12 and Ser14 each carry phosphoserine. Residues 48 to 68 (MMLAGVGFFLDSYDLFIINLV) form a helical membrane-spanning segment. Residues 69–99 (TPIFEYLYWGGIEKGPTGKGHYPSGIRGLVN) are Extracellular-facing. A helical membrane pass occupies residues 100-120 (ASANIGNIFGQLLFGFMGDFF). Residues 121-123 (GRK) lie on the Cytoplasmic side of the membrane. Residues 124–144 (FVYGKEMVIVIIATVLVIAMP) traverse the membrane as a helical segment. The Extracellular segment spans residues 145–153 (KSIHSPLSK). A helical transmembrane segment spans residues 154–174 (MMWVFCWRWLLGVGIGGDYPM). The Cytoplasmic segment spans residues 175–193 (SAAITSERSKIKRRGTLIS). Residues 194–214 (LIFAFQGFGTLAGAIVTIILL) traverse the membrane as a helical segment. Residues 215-229 (GCFEHPLNREGHYHK) are Extracellular-facing. The chain crosses the membrane as a helical span at residues 230 to 250 (LEGVWRLQFGLALVPAIGVLI). Topologically, residues 251 to 346 (PRLIMKESKS…TYFRQWRHFK (96 aa)) are cytoplasmic. The segment at 265-297 (KALNSAEGKDPKAFFNTDDEDNMKKSSSHGDSE) is disordered. The span at 286-296 (NMKKSSSHGDS) shows a compositional bias: basic and acidic residues. Residues Ser292 and Ser296 each carry the phosphoserine modification. A helical membrane pass occupies residues 347-367 (HLLGTSVCWFLLDIAFYGVNL). At 368-395 (NQSVILKNIGFSTGTNEYRTLMKNAIGN) the chain is on the extracellular side. The chain crosses the membrane as a helical span at residues 396–416 (LIIAVAGYVPGYWFNVFLVEI). Over 417-420 (LGRK) the chain is Cytoplasmic. Residues 421–441 (WIQLQGFVITGLMFAILAGRW) traverse the membrane as a helical segment. The Extracellular portion of the chain corresponds to 442-449 (NEISTGGR). A helical membrane pass occupies residues 450–470 (FACFVIAQLFSNFGPNSTTFI). Residues 471–485 (YPAEVFPARVRGTAH) are Cytoplasmic-facing. A helical membrane pass occupies residues 486 to 506 (GVSAALGKCGAILASLLFNFL). The Extracellular segment spans residues 507–508 (TG). A helical transmembrane segment spans residues 509–529 (VIGYGNVMWIFCGCMWGGILF). Over 530 to 572 (TLLLPETKGRDADEIDRLELFYGKDGKVQCDSKWKSWYFNGIF) the chain is Cytoplasmic.

The protein belongs to the major facilitator superfamily. Sugar transporter (TC 2.A.1.1) family.

Its subcellular location is the membrane. High-affinity transporter for external inorganic phosphate. In Schizosaccharomyces pombe (strain 972 / ATCC 24843) (Fission yeast), this protein is Putative inorganic phosphate transporter C8E4.01c.